We begin with the raw amino-acid sequence, 475 residues long: Ribulose bisphosphate carboxylase large chain (475 aa).

A propeptide spanning residues 1 to 2 is cleaved from the precursor; the sequence is MS. Pro3 bears the N-acetylproline mark. The residue at position 14 (Lys14) is an N6,N6,N6-trimethyllysine. Asn123 and Thr173 together coordinate substrate. The Proton acceptor role is filled by Lys175. Substrate is bound at residue Lys177. Residues Lys201, Asp203, and Glu204 each contribute to the Mg(2+) site. N6-carboxylysine is present on Lys201. Catalysis depends on His294, which acts as the Proton acceptor. Residues Arg295, His327, and Ser379 each coordinate substrate.

It belongs to the RuBisCO large chain family. Type I subfamily. As to quaternary structure, heterohexadecamer of 8 large chains and 8 small chains; disulfide-linked. The disulfide link is formed within the large subunit homodimers. The cofactor is Mg(2+). The disulfide bond which can form in the large chain dimeric partners within the hexadecamer appears to be associated with oxidative stress and protein turnover.

It is found in the plastid. The protein localises to the chloroplast. The enzyme catalyses 2 (2R)-3-phosphoglycerate + 2 H(+) = D-ribulose 1,5-bisphosphate + CO2 + H2O. The catalysed reaction is D-ribulose 1,5-bisphosphate + O2 = 2-phosphoglycolate + (2R)-3-phosphoglycerate + 2 H(+). In terms of biological role, ruBisCO catalyzes two reactions: the carboxylation of D-ribulose 1,5-bisphosphate, the primary event in carbon dioxide fixation, as well as the oxidative fragmentation of the pentose substrate in the photorespiration process. Both reactions occur simultaneously and in competition at the same active site. The sequence is that of Ribulose bisphosphate carboxylase large chain from Citrus sinensis (Sweet orange).